A 363-amino-acid chain; its full sequence is MKLKLILAVAMLAFSLPSQAERIKDIANVQGVRNNQLIGYGLVVGLPGTGEKTRYTEQTFTTMLKNFGINLPDNFRPKIKNVAVVAVHADMPAFIKPGQELDVTVSSLGEAKSLRGGTLLQTFLKGVDGNVYAIAQGSLVVSGFSADGLDGSKVIQNTPTVGRIPNGAIVERSVATPFSTGDYLTFNLRRSDFSTAQRMADAINDLLGPDMARPLDATSVQVSAPRDVSQRVSFLATLENIEVEPADESAKVIVNSRTGTIVVGQNVKLLPAAVTHGGLTVTIAEATQVSQPNALANGQTTVTSNSTINASESNRRMFMFNPGTTLDELVRAVNLVGAAPSDVLAILEALKVAGALHGELIII.

A signal peptide spans 1 to 20; the sequence is MKLKLILAVAMLAFSLPSQA.

This sequence belongs to the FlgI family. In terms of assembly, the basal body constitutes a major portion of the flagellar organelle and consists of four rings (L,P,S, and M) mounted on a central rod.

It is found in the periplasm. It localises to the bacterial flagellum basal body. Assembles around the rod to form the L-ring and probably protects the motor/basal body from shearing forces during rotation. In Shewanella sp. (strain MR-7), this protein is Flagellar P-ring protein.